Reading from the N-terminus, the 147-residue chain is Hemoglobin subunit beta-2 (147 aa).

The Globin domain maps to 3–147 (EWTDSERAII…VVSALGRQYH (145 aa)). 2 residues coordinate heme b: His64 and His93.

It belongs to the globin family. In terms of assembly, hb 3 is a heterotetramer of two alpha-2 and two beta-2 chains. Red blood cells.

Its function is as follows. Involved in oxygen transport from gills to the various peripheral tissues. This is Hemoglobin subunit beta-2 (hbb2) from Boreogadus saida (Polar cod).